The chain runs to 163 residues: Ubiquitin-like protein 1-ribosomal protein eS31 fusion protein (163 aa).

The Ubiquitin-like domain maps to 1 to 70; the sequence is MVFVKTLNRT…IYVNLELLGG (70 aa). Glycine 70 participates in a covalent cross-link: Glycyl lysine isopeptide (Gly-Lys) (interchain with K-? in acceptor proteins). A C4-type zinc finger spans residues 115–138; sequence CQQPSCGGGVFMAQHANRHYCGRC.

It in the N-terminal section; belongs to the ubiquitin family. In the C-terminal section; belongs to the eukaryotic ribosomal protein eS31 family.

This Caenorhabditis briggsae protein is Ubiquitin-like protein 1-ribosomal protein eS31 fusion protein (ubl-1).